The primary structure comprises 828 residues: Phenylalanine--tRNA ligase beta subunit (828 aa).

The tRNA-binding domain occupies 43-161 (LSKNTNLVVG…DQIALGSNAL (119 aa)). Positions 203-230 (KKKEKKTINYKTKNSKDQTNRKTTPKLN) are disordered. The 84-residue stretch at 436-519 (RTNPTISLDL…RFYGCHKLPP (84 aa)) folds into the B5 domain. Aspartate 497, aspartate 503, and aspartate 507 together coordinate Mg(2+). The FDX-ACB domain maps to 736 to 828 (PKFPTVIRDL…LIKHFRIEIR (93 aa)).

Belongs to the phenylalanyl-tRNA synthetase beta subunit family. Type 1 subfamily. Tetramer of two alpha and two beta subunits. Requires Mg(2+) as cofactor.

The protein resides in the cytoplasm. The enzyme catalyses tRNA(Phe) + L-phenylalanine + ATP = L-phenylalanyl-tRNA(Phe) + AMP + diphosphate + H(+). The polypeptide is Phenylalanine--tRNA ligase beta subunit (Aster yellows witches'-broom phytoplasma (strain AYWB)).